The primary structure comprises 418 residues: Tyrosine--tRNA ligase 1 (418 aa).

Tyr34 is a binding site for L-tyrosine. A 'HIGH' region motif is present at residues 39-48; the sequence is PTGDSMHIGH. Residues Tyr166 and Gln170 each contribute to the L-tyrosine site. The 'KMSKS' region signature appears at 228 to 232; it reads KFGKT. Lys231 contacts ATP. In terms of domain architecture, S4 RNA-binding spans 350–416; the sequence is KNIVDWLVDT…GKKNYFLAKV (67 aa).

This sequence belongs to the class-I aminoacyl-tRNA synthetase family. TyrS type 1 subfamily. In terms of assembly, homodimer.

The protein localises to the cytoplasm. It catalyses the reaction tRNA(Tyr) + L-tyrosine + ATP = L-tyrosyl-tRNA(Tyr) + AMP + diphosphate + H(+). Functionally, catalyzes the attachment of tyrosine to tRNA(Tyr) in a two-step reaction: tyrosine is first activated by ATP to form Tyr-AMP and then transferred to the acceptor end of tRNA(Tyr). The sequence is that of Tyrosine--tRNA ligase 1 from Enterococcus faecalis (strain ATCC 700802 / V583).